Reading from the N-terminus, the 514-residue chain is Ras-GEF domain-containing family member 1B-A (514 aa).

One can recognise an N-terminal Ras-GEF domain in the interval histidine 76 to threonine 206. Positions aspartate 246–proline 494 constitute a Ras-GEF domain.

Detected in oocytes, and in embryos at 4 to 120 hours post-fertilization (hpf). Detected along marginal blastomeres at early epiboly stage and throughout the margin at the onset of gastrulation. At 60% epiboly, strongest expression is found in the dorsal shield region and is restricted to the epiblast. Detected in the anterior border of the presomitic mesoderm at the end of epiboly. Detected in adaxial cells, in the somites and in the nervous system during somitogenesis. Detected in diencephalon and hindbrain and in cells surrounding the notochord, including adaxial cells and ventral mesendoderm, in 15-somite stage embryos. At 48 hpf, detected mainly in the brain.

Guanine nucleotide exchange factor (GEF) for Ras family proteins (in vitro). The chain is Ras-GEF domain-containing family member 1B-A (rasgef1ba) from Danio rerio (Zebrafish).